The sequence spans 93 residues: HIG1 domain family member 1A, mitochondrial (93 aa).

The HIG1 domain maps to 1–93; the sequence is MSTDTGVSLP…YREFWAKPKP (93 aa). Ser2 is modified (N-acetylserine). Position 8 is a phosphoserine (Ser8). The next 2 membrane-spanning stretches (helical) occupy residues 26 to 46 and 60 to 80; these read EAPF…YGLY and LIHM…VGMG.

As to quaternary structure, associates with cytochrome c oxidase (COX, complex IV); proposed complex component. Also associates with respiratory chain supercomplexes.

Its subcellular location is the mitochondrion membrane. The protein localises to the mitochondrion inner membrane. Proposed subunit of cytochrome c oxidase (COX, complex IV), which is the terminal component of the mitochondrial respiratory chain that catalyzes the reduction of oxygen to water. May play a role in the assembly of respiratory supercomplexes. The polypeptide is HIG1 domain family member 1A, mitochondrial (HIGD1A) (Homo sapiens (Human)).